Consider the following 946-residue polypeptide: Inositol-trisphosphate 3-kinase B (946 aa).

Disordered regions lie at residues 19 to 128 (EMKS…EEAK), 156 to 288 (AQSS…TRSC), 308 to 472 (ARVT…GIPS), 486 to 561 (KDLK…RKAC), and 580 to 638 (GALE…HTLD). 3 positions are modified to phosphoserine: S43, S49, and S71. Positions 83–105 (NSSSGSGSGSSGSSVSSPSWAGR) are enriched in low complexity. S204 and S269 each carry phosphoserine. A compositionally biased stretch (polar residues) spans 396 to 411 (TTVSVQSAESSDSLSW). Low complexity predominate over residues 445-458 (GGSPTLGLLGGSPS). Residues 524-534 (TGVQSEGTWES) are compositionally biased toward polar residues. Over residues 599–612 (SSSSASSTGFSSSY) the composition is skewed to low complexity. Residues S679, K690, 730–732 (DDL), and D743 each bind ATP. 2 residues coordinate substrate: K745 and R766. The tract at residues 768-776 (DMYQKMIEV) is calmodulin-binding. Position 793-800 (793-800 (KPRYMQWR)) interacts with substrate. Positions 817 and 897 each coordinate ATP. K900 contributes to the substrate binding site.

Belongs to the inositol phosphokinase (IPK) family. As to quaternary structure, interacts with DMTN.

Its subcellular location is the cytoplasm. The protein localises to the cytoskeleton. It is found in the endoplasmic reticulum. The catalysed reaction is 1D-myo-inositol 1,4,5-trisphosphate + ATP = 1D-myo-inositol 1,3,4,5-tetrakisphosphate + ADP + H(+). With respect to regulation, IP3K is activated by calcium and calmodulin. Form B is much more sensitive to calcium/calmodulin than form A. Functionally, catalyzes the phosphorylation of 1D-myo-inositol 1,4,5-trisphosphate (InsP3) into 1D-myo-inositol 1,3,4,5-tetrakisphosphate and participates to the regulation of calcium homeostasis. The polypeptide is Inositol-trisphosphate 3-kinase B (Homo sapiens (Human)).